The following is a 203-amino-acid chain: Formate hydrogenlyase subunit 2 (203 aa).

4 consecutive 4Fe-4S ferredoxin-type domains span residues 2 to 32 (NRFVIADSTLCIGCHTCEAACSETHRQHGLQ), 42 to 72 (NEKESAPQLCHHCEDAPCAVVCPVNAITRVD), 73 to 102 (GAVQLNESLCVSCKLCGIACPFGAIEFSGS), and 137 to 169 (RAIAVKCDLCSFDEQGPACVRMCPTKALHLVDN). [4Fe-4S] cluster contacts are provided by C12, C15, C18, C22, C51, C54, C59, C63, C82, C85, C88, C92, C143, C146, C155, and C159.

In terms of assembly, FHL comprises of a formate dehydrogenase, unidentified electron carriers and a hydrogenase (isoenzyme 3). In this non-energy conserving pathway, molecular hydrogen and carbodioxide are released from formate. The cofactor is [4Fe-4S] cluster.

In terms of biological role, probable electron transfer protein for hydrogenase 3. The protein is Formate hydrogenlyase subunit 2 (hycB) of Escherichia coli (strain K12).